The sequence spans 135 residues: Sex-regulated protein janus-A (135 aa).

Lys-37 serves as a coordination point for substrate. His-63 acts as the Proton acceptor in catalysis. 104–106 (SQG) is a binding site for substrate.

It belongs to the janus family.

In terms of biological role, janA and janB regulate somatic sex differentiation. This chain is Sex-regulated protein janus-A (janA), found in Drosophila erecta (Fruit fly).